The following is a 358-amino-acid chain: CX3C chemokine receptor 1 (358 aa).

The Extracellular segment spans residues 1–26 (MHTTLPESTSENFEYYDLAEACDMGD). Residues 27-47 (IVALGTVFVVILYSLVFAFGL) form a helical membrane-spanning segment. At 48–68 (VGNLLVVFALINSQRSKSITD) the chain is on the cytoplasmic side. The chain crosses the membrane as a helical span at residues 69-89 (IYLLNLALSDLLFVATLPFWT). Residues 90–105 (HYVINEQGLHHATCKL) lie on the Extracellular side of the membrane. Cys-103 and Cys-176 are oxidised to a cystine. A helical transmembrane segment spans residues 106-126 (ITAFFFIGFFGGIFFITVISV). Topologically, residues 127–147 (DRFLAIVLAANSMSNRTVQHG) are cytoplasmic. A helical transmembrane segment spans residues 148–168 (VTTSLGVWAAAILVATPQFMF). Residues 169-186 (TREKENECFGDYPEILQE) are Extracellular-facing. The chain crosses the membrane as a helical span at residues 187–207 (IWPVILNTEINFLGFLLPLLI). The Cytoplasmic portion of the chain corresponds to 208–232 (MSYCYFRIMQTLFSCKNHKKAKAIR). Residues 233 to 253 (LIFLVVVVFFLFWTPYNVMIF) traverse the membrane as a helical segment. At 254–275 (LQTLNLYDFFPKCDVKRDLKLA) the chain is on the extracellular side. The chain crosses the membrane as a helical span at residues 276 to 296 (ISVTETIAFSHCCLNPLIYAF). Over 297–358 (AGEKFRRYLY…TSDGDASILL (62 aa)) the chain is Cytoplasmic. Phosphothreonine is present on Thr-349.

It belongs to the G-protein coupled receptor 1 family. In terms of assembly, found in a ternary complex with CX3CL1 and ITGAV:ITGB3 or ITGA4:ITGB1. Post-translationally, this protein is not N-glycosylated which is unusual for G-protein-coupled receptors.

It localises to the cell membrane. Receptor for the C-X3-C chemokine fractalkine (CX3CL1) present on many early leukocyte cells; CX3CR1-CX3CL1 signaling exerts distinct functions in different tissue compartments, such as immune response, inflammation, cell adhesion and chemotaxis. CX3CR1-CX3CL1 signaling mediates cell migratory functions. Responsible for the recruitment of natural killer (NK) cells to inflamed tissues. Acts as a regulator of inflammation process leading to atherogenesis by mediating macrophage and monocyte recruitment to inflamed atherosclerotic plaques, promoting cell survival. Involved in airway inflammation by promoting interleukin 2-producing T helper (Th2) cell survival in inflamed lung. Involved in the migration of circulating monocytes to non-inflamed tissues, where they differentiate into macrophages and dendritic cells. Acts as a negative regulator of angiogenesis, probably by promoting macrophage chemotaxis. Plays a key role in brain microglia by regulating inflammatory response in the central nervous system (CNS) and regulating synapse maturation. Required to restrain the microglial inflammatory response in the CNS and the resulting parenchymal damage in response to pathological stimuli. Involved in brain development by participating in synaptic pruning, a natural process during which brain microglia eliminates extra synapses during postnatal development. Synaptic pruning by microglia is required to promote the maturation of circuit connectivity during brain development. Acts as an important regulator of the gut microbiota by controlling immunity to intestinal bacteria and fungi. Expressed in lamina propria dendritic cells in the small intestine, which form transepithelial dendrites capable of taking up bacteria in order to provide defense against pathogenic bacteria. Required to initiate innate and adaptive immune responses against dissemination of commensal fungi (mycobiota) component of the gut: expressed in mononuclear phagocytes (MNPs) and acts by promoting induction of antifungal IgG antibodies response to confer protection against disseminated C.albicans or C.auris infection. Also acts as a receptor for C-C motif chemokine CCL26, inducing cell chemotaxis. The sequence is that of CX3C chemokine receptor 1 from Bos taurus (Bovine).